A 146-amino-acid polypeptide reads, in one-letter code: Leghemoglobin Lb120-34 (146 aa).

In terms of domain architecture, Globin spans 2-146 (GFTEKQEALV…LASAIKKAMN (145 aa)). Nitrated tyrosine occurs at positions 24 and 29. Ser44 contacts heme b. Ser44 is modified (phosphoserine). His61 is an O2 binding site. Residues Lys64, His93, and Lys96 each coordinate heme b. Tyr134 carries the nitrated tyrosine modification.

This sequence belongs to the plant globin family. As to quaternary structure, monomer. In terms of processing, nitrated in effective nodules and particularly in hypoxic conditions; this mechanism may play a protective role in the symbiosis by buffering toxic peroxynitrite NO(2)(-). Nitration level decrease during nodule senescence. Post-translationally, phosphorylation at Ser-44 disrupts the molecular environment of its porphyrin ring oxygen binding pocket, thus leading to a reduced oxygen consumption and to the delivery of oxygen O(2) to symbiosomes. As to expression, root nodules.

Its subcellular location is the cytoplasm. The protein resides in the cytosol. It is found in the nucleus. Leghemoglobin that reversibly binds oxygen O(2) through a pentacoordinated heme iron. In root nodules, facilitates the diffusion of oxygen to the bacteroids while preventing the bacterial nitrogenase from being inactivated by buffering dioxygen, nitric oxide and carbon monoxide, and promoting the formation of reactive oxygen species (ROS, e.g. H(2)O(2)). This role is essential for symbiotic nitrogen fixation (SNF). The polypeptide is Leghemoglobin Lb120-34 (Pisum sativum (Garden pea)).